A 297-amino-acid polypeptide reads, in one-letter code: 32 kDa beta-galactoside-binding lectin lec-3 (297 aa).

2 Galectin domains span residues 11–142 and 151–290; these read YRSK…VQWG and ESGI…IQVV. 224-230 contributes to the a beta-D-galactoside binding site; the sequence is WGNEERE.

Binds galactose. The sequence is that of 32 kDa beta-galactoside-binding lectin lec-3 (lec-3) from Caenorhabditis elegans.